The sequence spans 131 residues: DNA-binding protein inhibitor ID-4 (131 aa).

Residues 36 to 88 enclose the bHLH domain; sequence ARYKMEEEETLCLQYDMNDCYSRLKRLVPTIPPNKKVSKVEILQHVIDYILDL.

As to quaternary structure, heterodimer with other HLH proteins. During embryonic development, expressed in a number of neural tissues, including Rohon-Beard neurons, olfactory placode, eye primordia, and the trigeminal ganglia. Also expressed in other organs including the pronephros and liver primordium. Pronephric development begins by stage 25 and increases during tailbud stages. Expressed in both the tubules and the duct. As embryogenesis progresses, expressed in the migrating melanocytes and lateral line structures.

The protein localises to the nucleus. Its function is as follows. Transcriptional regulator (lacking a basic DNA binding domain) which negatively regulates the basic helix-loop-helix (bHLH) transcription factors by forming heterodimers and inhibiting their DNA binding and transcriptional activity. Inhibits the activity of both neurogenic (neurog1/neurogenin, neurod1/neuroD) and myogenic (myod1/myoD) bHLH factors. The protein is DNA-binding protein inhibitor ID-4 of Xenopus laevis (African clawed frog).